A 704-amino-acid polypeptide reads, in one-letter code: Polyribonucleotide nucleotidyltransferase (704 aa).

Residues aspartate 488 and aspartate 494 each contribute to the Mg(2+) site. A KH domain is found at 555-614 (PRITTIKINPEKIRDVIGKGGATIRALTEETGTTIELDDDGTVKIASSNGEATKEAIRRI). Residues 624–692 (GTVYNGKVVR…RQGRVRLSMK (69 aa)) form the S1 motif domain.

The protein belongs to the polyribonucleotide nucleotidyltransferase family. As to quaternary structure, component of the RNA degradosome, which is a multiprotein complex involved in RNA processing and mRNA degradation. Requires Mg(2+) as cofactor.

It localises to the cytoplasm. The enzyme catalyses RNA(n+1) + phosphate = RNA(n) + a ribonucleoside 5'-diphosphate. In terms of biological role, involved in mRNA degradation. Catalyzes the phosphorolysis of single-stranded polyribonucleotides processively in the 3'- to 5'-direction. This Shewanella pealeana (strain ATCC 700345 / ANG-SQ1) protein is Polyribonucleotide nucleotidyltransferase.